The primary structure comprises 298 residues: MGPAEAGFGDYVALLKPRVMSLVVFTAFVGLWIAPQPVNPFVAFCAVLFIALGGGASGALNMWYDADIDAVMRRTAGRPVPSGRVTSQEPLAVGIALSGLSVMMLGAGGNWFAAGFLAFTIFFYAVVYTIWLKRSTPQNIVIGGAAGAFPPMIGWALPTGGIGIESLLMFALIFFWTPPHFWALALFMKDDYSKAGVPMLTVTHGRKVTRCHIFAYTLVLAPFALWLGFTSVGGPLYLAVSVVLNALFIAGGWQILRRSEDQAQADGYRVEKRYFRLSLYYTFLHFLALLVQHWVGGW.

9 helical membrane-spanning segments follow: residues 19–39 (VMSL…QPVN), 40–60 (PFVA…SGAL), 91–111 (LAVG…GGNW), 112–132 (FAAG…TIWL), 140–160 (IVIG…LPTG), 167–187 (LLMF…LALF), 213–233 (IFAY…TSVG), 236–256 (LYLA…WQIL), and 277–297 (LSLY…WVGG).

The protein belongs to the UbiA prenyltransferase family. Protoheme IX farnesyltransferase subfamily. Interacts with CtaA.

It is found in the cell inner membrane. It catalyses the reaction heme b + (2E,6E)-farnesyl diphosphate + H2O = Fe(II)-heme o + diphosphate. It participates in porphyrin-containing compound metabolism; heme O biosynthesis; heme O from protoheme: step 1/1. In terms of biological role, converts heme B (protoheme IX) to heme O by substitution of the vinyl group on carbon 2 of heme B porphyrin ring with a hydroxyethyl farnesyl side group. The sequence is that of Protoheme IX farnesyltransferase from Paracoccus denitrificans.